We begin with the raw amino-acid sequence, 462 residues long: Signal recognition particle protein (462 aa).

GTP-binding positions include 107 to 114 (GLQGAGKT), 190 to 194 (DTAGR), and 248 to 251 (TKVD).

This sequence belongs to the GTP-binding SRP family. SRP54 subfamily. As to quaternary structure, part of the signal recognition particle protein translocation system, which is composed of SRP and FtsY. SRP is a ribonucleoprotein composed of Ffh and a 4.5S RNA molecule.

It localises to the cytoplasm. It carries out the reaction GTP + H2O = GDP + phosphate + H(+). Involved in targeting and insertion of nascent membrane proteins into the cytoplasmic membrane. Binds to the hydrophobic signal sequence of the ribosome-nascent chain (RNC) as it emerges from the ribosomes. The SRP-RNC complex is then targeted to the cytoplasmic membrane where it interacts with the SRP receptor FtsY. Interaction with FtsY leads to the transfer of the RNC complex to the Sec translocase for insertion into the membrane, the hydrolysis of GTP by both Ffh and FtsY, and the dissociation of the SRP-FtsY complex into the individual components. The polypeptide is Signal recognition particle protein (Haemophilus influenzae (strain ATCC 51907 / DSM 11121 / KW20 / Rd)).